The sequence spans 384 residues: Succinyl-diaminopimelate desuccinylase (384 aa).

His71 lines the Zn(2+) pocket. Asp73 is a catalytic residue. Asp104 provides a ligand contact to Zn(2+). Glu139 acts as the Proton acceptor in catalysis. Residues Glu140, Glu168, and His357 each contribute to the Zn(2+) site.

It belongs to the peptidase M20A family. DapE subfamily. Homodimer. Zn(2+) serves as cofactor. The cofactor is Co(2+).

The enzyme catalyses N-succinyl-(2S,6S)-2,6-diaminopimelate + H2O = (2S,6S)-2,6-diaminopimelate + succinate. It participates in amino-acid biosynthesis; L-lysine biosynthesis via DAP pathway; LL-2,6-diaminopimelate from (S)-tetrahydrodipicolinate (succinylase route): step 3/3. Its function is as follows. Catalyzes the hydrolysis of N-succinyl-L,L-diaminopimelic acid (SDAP), forming succinate and LL-2,6-diaminopimelate (DAP), an intermediate involved in the bacterial biosynthesis of lysine and meso-diaminopimelic acid, an essential component of bacterial cell walls. In Bradyrhizobium sp. (strain ORS 278), this protein is Succinyl-diaminopimelate desuccinylase.